The chain runs to 286 residues: Ribose-5-phosphate isomerase (286 aa).

It belongs to the ribose 5-phosphate isomerase family.

Its subcellular location is the cytoplasm. The catalysed reaction is aldehydo-D-ribose 5-phosphate = D-ribulose 5-phosphate. It participates in carbohydrate degradation; pentose phosphate pathway; D-ribose 5-phosphate from D-ribulose 5-phosphate (non-oxidative stage): step 1/1. The chain is Ribose-5-phosphate isomerase (RKI1) from Mycosarcoma maydis (Corn smut fungus).